The primary structure comprises 386 residues: Antilisterial bacteriocin subtilosin biosynthesis protein AlbE (386 aa).

Involved in the production of the bacteriocin subtilosin. The protein is Antilisterial bacteriocin subtilosin biosynthesis protein AlbE (albE) of Bacillus subtilis.